We begin with the raw amino-acid sequence, 801 residues long: Phenylalanine--tRNA ligase beta subunit (801 aa).

The tRNA-binding domain maps to 39–147; the sequence is GGGLDQVVVA…SDLPLGVPLF (109 aa). The B5 domain maps to 401-477; it reads VSHRTIRFRV…RLNGYDRIET (77 aa). Residues D455, D461, E464, and E465 each coordinate Mg(2+). The FDX-ACB domain maps to 708 to 801; sequence SRFPDTFRDI…LVAKLGATIR (94 aa).

The protein belongs to the phenylalanyl-tRNA synthetase beta subunit family. Type 1 subfamily. Tetramer of two alpha and two beta subunits. The cofactor is Mg(2+).

The protein localises to the cytoplasm. It catalyses the reaction tRNA(Phe) + L-phenylalanine + ATP = L-phenylalanyl-tRNA(Phe) + AMP + diphosphate + H(+). This Geobacter sulfurreducens (strain ATCC 51573 / DSM 12127 / PCA) protein is Phenylalanine--tRNA ligase beta subunit.